Here is a 206-residue protein sequence, read N- to C-terminus: Large ribosomal subunit protein uL4 (206 aa).

Residues 42 to 54 (RRQQGTHQSQGRS) are compositionally biased toward polar residues. A disordered region spans residues 42 to 93 (RRQQGTHQSQGRSDVSRTGAKMFKQKGTGRARHSSARAPQFRGGGKAHGPVV). A compositionally biased stretch (basic residues) spans 64 to 76 (FKQKGTGRARHSS).

It belongs to the universal ribosomal protein uL4 family. Part of the 50S ribosomal subunit.

Its function is as follows. One of the primary rRNA binding proteins, this protein initially binds near the 5'-end of the 23S rRNA. It is important during the early stages of 50S assembly. It makes multiple contacts with different domains of the 23S rRNA in the assembled 50S subunit and ribosome. Functionally, forms part of the polypeptide exit tunnel. This is Large ribosomal subunit protein uL4 from Bartonella henselae (strain ATCC 49882 / DSM 28221 / CCUG 30454 / Houston 1) (Rochalimaea henselae).